The primary structure comprises 231 residues: Cytochrome b-c1 complex subunit Rieske, mitochondrial (231 aa).

The transit peptide at 1-24 (MAPVSIVSRAAMRAAAAPARAVRA) directs the protein to the mitochondrion. Residues 25–32 (LTTSTALQ) constitute a propeptide, removed in mature form. At 33–65 (GSSSSTFESPFKGESKAAKVPDFGKYMSKAPPS) the chain is on the mitochondrial matrix side. A helical transmembrane segment spans residues 66–95 (TNMLFSYFMVGTMGAITAAGAKSTIQEFLK). Residues 96-231 (NMSASADVLA…FPEEGKLVIG (136 aa)) are Mitochondrial intermembrane-facing. The region spanning 134–229 (RHRTPAEIEE…YEFPEEGKLV (96 aa)) is the Rieske domain. Residues C174, H176, C193, and H196 each coordinate [2Fe-2S] cluster. C179 and C195 are joined by a disulfide.

Belongs to the Rieske iron-sulfur protein family. As to quaternary structure, component of the ubiquinol-cytochrome c oxidoreductase (cytochrome b-c1 complex, complex III, CIII), a multisubunit enzyme composed of 10 subunits. The complex is composed of 3 respiratory subunits cytochrome b (cob), cytochrome c1 (cyt-1) and Rieske protein (fes-1), 2 core protein subunits pep and ucr-1, and 5 low-molecular weight protein subunits qcr6, qcr7, qcr8, qcr9 and probably NCU16844/qcr10. The complex exists as an obligatory dimer and forms supercomplexes (SCs) in the inner mitochondrial membrane with NADH-ubiquinone oxidoreductase (complex I, CI) and cytochrome c oxidase (complex IV, CIV), resulting in different assemblies (supercomplexes SCI(1)III(2), SCIII(2)IV(1) and SCIII(2)IV(2) as well as higher order I(x)III(y)IV(z) megacomplexes). [2Fe-2S] cluster is required as a cofactor. In terms of processing, processed by both the mitochondrial processing peptidase (MPP) and the mitochondrial intermediate protease (MIP). Initially, MPP removes 25 amino acids from the newly imported precursor in the mitochondrial matrix. This proteolytic processing is then followed by a second proteolytic cleavage by MIP, which removes an octapeptide to generate mature-sized Rieske protein.

The protein localises to the mitochondrion inner membrane. It catalyses the reaction a quinol + 2 Fe(III)-[cytochrome c](out) = a quinone + 2 Fe(II)-[cytochrome c](out) + 2 H(+)(out). Component of the ubiquinol-cytochrome c oxidoreductase, a multisubunit transmembrane complex that is part of the mitochondrial electron transport chain which drives oxidative phosphorylation. The respiratory chain contains 3 multisubunit complexes succinate dehydrogenase (complex II, CII), ubiquinol-cytochrome c oxidoreductase (cytochrome b-c1 complex, complex III, CIII) and cytochrome c oxidase (complex IV, CIV), that cooperate to transfer electrons derived from NADH and succinate to molecular oxygen, creating an electrochemical gradient over the inner membrane that drives transmembrane transport and the ATP synthase. The cytochrome b-c1 complex catalyzes electron transfer from ubiquinol to cytochrome c, linking this redox reaction to translocation of protons across the mitochondrial inner membrane, with protons being carried across the membrane as hydrogens on the quinol. In the process called Q cycle, 2 protons are consumed from the matrix, 4 protons are released into the intermembrane space and 2 electrons are passed to cytochrome c. The Rieske protein is a catalytic core subunit containing a [2Fe-2S] iron-sulfur cluster. It cycles between 2 conformational states during catalysis to transfer electrons from the quinol bound in the Q(0) site in cytochrome b to cytochrome c1. This chain is Cytochrome b-c1 complex subunit Rieske, mitochondrial (fes-1), found in Neurospora crassa (strain ATCC 24698 / 74-OR23-1A / CBS 708.71 / DSM 1257 / FGSC 987).